Consider the following 143-residue polypeptide: Peptide methionine sulfoxide reductase MsrB (143 aa).

The region spanning 16-139 (DAELRRRLTP…NSAALNFESR (124 aa)) is the MsrB domain. Zn(2+) contacts are provided by C55, C58, C104, and C107. C128 functions as the Nucleophile in the catalytic mechanism.

This sequence belongs to the MsrB Met sulfoxide reductase family. It depends on Zn(2+) as a cofactor.

It carries out the reaction L-methionyl-[protein] + [thioredoxin]-disulfide + H2O = L-methionyl-(R)-S-oxide-[protein] + [thioredoxin]-dithiol. The chain is Peptide methionine sulfoxide reductase MsrB from Burkholderia ambifaria (strain MC40-6).